The chain runs to 569 residues: Acyl-CoA transferase FVEG_12629 (569 aa).

The protein belongs to the CoA-transferase III family.

Its function is as follows. Acyl-CoA transferase; part of the Fusarium detoxification of benzoxazolinone cluster 2 (FDB2) involved in the degradation of benzoxazolinones produced by the host plant. Maize, wheat, and rye produce the 2 benzoxazinone phytoanticipins 2,4-dihy-droxy-7-methoxy-1,4-benzoxazin-3-one (DIMBOA) and 2,4-dihydroxy-1,4-benzoxazin-3-one (DIBOA) that, due to their inherent instability once released, spontaneously degrade to the more stable corresponding benzoxazolinones, 6-methoxy-2-benzoxazolinone (MBOA) and 2-benzoxazolinone (BOA), respectively. The first step in the detoxification of benzoxazolinones involves the hydrolysis of the cyclic ester bond of benzoxazolinones by the FDB1 cluster gamma-lactamase MBL1 to aminophenols. MBL1 is able to convert BOA into 2-aminophenol (2-AP), as well as MBOA into 5-methoxy-2-aminophenol (2-AMP). The FDB2 cluster N-malonyltransferase FDB2/NAT1 then metabolizes aminophenols via N-malonylation to non-toxic malonamic acids. FDB2/NAT1 converts 2-AP into N-(2-hydroxyphenyl) malonamic acid (HPMA) and 2-AMP into N-(2-hydroxy-4-methoxyphenyl) malonamic acid (HMPMA). The duplicated dienlactone hydrolases DLH1 and DLH2 may provide redundant function for hydrolyzing the lactone moiety in the BOA molecule. The roles of the amidases an other enzymes encoded by the 2 FDB clusters have not been identified so far. The protein is Acyl-CoA transferase FVEG_12629 of Gibberella moniliformis (strain M3125 / FGSC 7600) (Maize ear and stalk rot fungus).